Reading from the N-terminus, the 428-residue chain is Dihydroorotase (428 aa).

His59 and His61 together coordinate Zn(2+). Substrate is bound by residues 61–63 (HLR) and Asn93. The Zn(2+) site is built by Asp151, His178, and His231. Residue Asn277 participates in substrate binding. Zn(2+) is bound at residue Asp304. Residue Asp304 is part of the active site. Residues His308 and 322–323 (FG) contribute to the substrate site.

It belongs to the metallo-dependent hydrolases superfamily. DHOase family. Class I DHOase subfamily. Requires Zn(2+) as cofactor.

It catalyses the reaction (S)-dihydroorotate + H2O = N-carbamoyl-L-aspartate + H(+). It participates in pyrimidine metabolism; UMP biosynthesis via de novo pathway; (S)-dihydroorotate from bicarbonate: step 3/3. In terms of biological role, catalyzes the reversible cyclization of carbamoyl aspartate to dihydroorotate. The protein is Dihydroorotase of Bacillus cereus (strain AH187).